We begin with the raw amino-acid sequence, 206 residues long: Large ribosomal subunit protein uL4 (206 aa).

A disordered region spans residues 44-78 (RSGNRAQKDREQVKHTTKKPWRQKGTGRARAGMSS). Over residues 58-70 (HTTKKPWRQKGTG) the composition is skewed to basic residues.

This sequence belongs to the universal ribosomal protein uL4 family. As to quaternary structure, part of the 50S ribosomal subunit.

In terms of biological role, one of the primary rRNA binding proteins, this protein initially binds near the 5'-end of the 23S rRNA. It is important during the early stages of 50S assembly. It makes multiple contacts with different domains of the 23S rRNA in the assembled 50S subunit and ribosome. Functionally, forms part of the polypeptide exit tunnel. This is Large ribosomal subunit protein uL4 from Paraburkholderia phytofirmans (strain DSM 17436 / LMG 22146 / PsJN) (Burkholderia phytofirmans).